A 270-amino-acid chain; its full sequence is uncharacterized protein (270 aa).

The region spanning 43 to 112 (CTANDIKRKY…REEYDRFGIH (70 aa)) is the J domain. Residues 239–270 (EQSKQIPTQQKPSSLPPPERALPAPTMPTPSS) form a disordered region. Polar residues predominate over residues 242-251 (KQIPTQQKPS). Over residues 252–270 (SLPPPERALPAPTMPTPSS) the composition is skewed to pro residues.

This is an uncharacterized protein from Schizosaccharomyces pombe (strain 972 / ATCC 24843) (Fission yeast).